We begin with the raw amino-acid sequence, 256 residues long: Lysine-rich coiled-coil protein 1 (256 aa).

Disordered stretches follow at residues 62 to 84 (RLPSGTNHSYPRSCSSSQTEDRV) and 144 to 256 (TIDP…ILGF). The segment covering 64–79 (PSGTNHSYPRSCSSSQ) has biased composition (polar residues). Basic and acidic residues-rich tracts occupy residues 161–188 (HVEEGREKQEERPKHERKRSSEEMDLNK) and 218–227 (KTRDVSSKKE). Positions 209-247 (EKLKNRKEKKTRDVSSKKEDRKRRKEKKEQGEERTEEEM) form a coiled coil.

The sequence is that of Lysine-rich coiled-coil protein 1 (Krcc1) from Mus musculus (Mouse).